The chain runs to 93 residues: MTNTTNAAAATGLTSTTNTPQVSAFVNNWDNLGMWWFSIALMFVCLIIMWLICCLKRKRARPPIYSPIIVLHPNNDGIHRLDGLKHMFFSLTV.

N-linked (GlcNAc...) asparagine; by host glycosylation occurs at Asn-3. Residues 34-55 (MWWFSIALMFVCLIIMWLICCL) traverse the membrane as a helical segment.

This sequence belongs to the adenoviridae E3A-1 family. Post-translationally, N-glycosylated and probably also O-glycosylated.

It localises to the host nucleus membrane. This Homo sapiens (Human) protein is Early E3A 10.5 kDa glycoprotein.